Consider the following 555-residue polypeptide: Glypican-6 (555 aa).

The N-terminal stretch at 1–23 (MPSWIRAVILPLSGLLLTLPAAA) is a signal peptide. Over residues 348–357 (PALRSARSAP) the composition is skewed to low complexity. Disordered regions lie at residues 348 to 376 (PALRSARSAPENFNTRFRPYNPEERPTTA) and 480 to 501 (GNDVNFQDTSDESSGSGSGSGC). S530 carries GPI-anchor amidated serine lipidation. A propeptide spans 531-555 (ASKFSSSLISWSLVCMVLALQRLYR) (removed in mature form).

It belongs to the glypican family. In the cartilage growth-plate, gradient of expression with highest levels from the proliferative and pre-hypertrophic zones to lowest, if any, in the hypertrophic zones (at protein level).

It localises to the cell membrane. The protein resides in the secreted. The protein localises to the extracellular space. Cell surface proteoglycan that bears heparan sulfate. Putative cell surface coreceptor for growth factors, extracellular matrix proteins, proteases and anti-proteases. Enhances migration and invasion of cancer cells through WNT5A signaling. The protein is Glypican-6 (Gpc6) of Mus musculus (Mouse).